The sequence spans 179 residues: Large ribosomal subunit protein uL5 (179 aa).

Belongs to the universal ribosomal protein uL5 family. In terms of assembly, part of the 50S ribosomal subunit; part of the 5S rRNA/L5/L18/L25 subcomplex. Contacts the 5S rRNA and the P site tRNA. Forms a bridge to the 30S subunit in the 70S ribosome.

Functionally, this is one of the proteins that bind and probably mediate the attachment of the 5S RNA into the large ribosomal subunit, where it forms part of the central protuberance. In the 70S ribosome it contacts protein S13 of the 30S subunit (bridge B1b), connecting the 2 subunits; this bridge is implicated in subunit movement. Contacts the P site tRNA; the 5S rRNA and some of its associated proteins might help stabilize positioning of ribosome-bound tRNAs. This chain is Large ribosomal subunit protein uL5, found in Pseudomonas fluorescens (strain SBW25).